The following is a 146-amino-acid chain: Large ribosomal subunit protein uL15 (146 aa).

The segment at 1–65 is disordered; that stretch reads MSDIQLNTLK…GQMPLQRRLP (65 aa). The span at 24–34 shows a compositional bias: gly residues; sequence RGIGSGLGKTA.

The protein belongs to the universal ribosomal protein uL15 family. In terms of assembly, part of the 50S ribosomal subunit.

Its function is as follows. Binds to the 23S rRNA. This Bordetella petrii (strain ATCC BAA-461 / DSM 12804 / CCUG 43448) protein is Large ribosomal subunit protein uL15.